The sequence spans 1078 residues: MTLDDNPVPPTLPYTLHGVFQQNVLDRPDASAVCAWDGDLTYRELDEKSSTLAHILRHRGVQDGALVALCFDHSLWTAVAMMAVSKAGGVWFFLEPKHPVNRLRQMCRSVQARMVLCSRSQASVAAELSDDQMEAPLSIEEAVLREEDPGPMDLEVVSPERPAYVAFTSGSTGSPKGAVMTHQAAVTGVLHNAKPMQLDRTARILQFASFAFDISFLEHFWALLLGGCLCIPAPLDRQNNTIHAVQSLQVNWMFLTPTVARLLEPPQLPSLRTLVLGGEPVTQADLDMWLPYVHLAGLYGPAECAVGIAVQPDYSRVESANNVGPPFSVACWIVSEQDPTQLAPRGAVGELVVEGPSISEGYINAPEQTTRAYLTNPTWLPAARHSTKKLYRTGDLARVLDDGSLLFHGRKDTQVKINGQRIELGEIEYHTRAVLGKEHLRSPPVVAEAMEVRGRALTVIAFYQVEGVCQDLDHDGQDLFLPPDDGFVGRKQSYQSQLRDHLPEYMIPTSFIPVRGLPLTMSGKTDRKTLREKFAQLPSDRIKAYFVDGDGGSRSTEGMPTTPLERQMQELWAATLKLELEEVGRNDPWMSLGGESLAAMRLVARARKEGIAVTVPDIFRHKTIATLCQHVSVRPGPETIESFPPFSLVQCQQGSTGIEELRHAAAQQCGLTPEAIEDLYPFTAMQEAVVIPPATIGVNYTLRLDVKLPAELDLEQLMRAWDMVVAANSVLRMRVVRLPADESETMVLAVTRPEIPMEPLFAERFAPGVDLWGLGKPLVRVGVAPGRLVMLIQHALYDGHSLGLIFRDLEQAYRGQPVAAVSYSPFVHWSTEWQDGSNKQQYWREKFAGFDGRVCPPRVADAGIGCMESQHFWGSLNFRPDGFTVTSKIRVALAVVLSWHFDTCDIVLGGIYARRGAPIPGIMESPVPASAILPDRIRLDPTQSLRANVDQDQENILTMMPYEGIRPSQVLDLSEAARAASQFQTILAVQQDNSSVYPEMFRDHEMGYYGPVTAHNLMMQCFLSPDRASARVSLRLSERTMQETTAWDRFLAHFEAVVDAIQEKPEIPVDRLRQHLGA.

The adenylation stretch occupies residues 20–417 (FQQNVLDRPD…HGRKDTQVKI (398 aa)). In terms of domain architecture, Carrier spans 559–635 (MPTTPLERQM…TLCQHVSVRP (77 aa)). Ser-596 carries the post-translational modification O-(pantetheine 4'-phosphoryl)serine. The condensation stretch occupies residues 699–1013 (NYTLRLDVKL…HEMGYYGPVT (315 aa)).

Belongs to the NRP synthetase family.

The catalysed reaction is holo-[peptidyl-carrier protein] + L-proline + ATP = L-prolyl-[peptidyl-carrier protein] + AMP + diphosphate. It functions in the pathway secondary metabolite biosynthesis. Its function is as follows. Nonribosomal peptide synthetase; part of the gene cluster that mediates the biosynthesis of aculenes, a unique type of norsesquiterpenes that contain a nordaucane skeleton linked to an L-proline moiety and are of mixed biosynthetic origin. The pathway begins with the synthesis of dauca-4,7-diene by the terpene cyclase aneC using farnesyl pyrophosphate (FPP) as substrate. The cytochrome P450 monooxygenase aneF then performs the initial oxidation at C-12 of dauca-4,7-diene to yield asperaculane D. Asperaculane D is substrate of the cytochrome P450 monooxygenase aneD for C-10 hydroxylation to yield asperaculane E. The cytochrome P450 monooxygenase aneG then converts asperaculane E into aculene D via C-2 oxidation. The monomodular nonribosomal peptide synthase aneB adenylates L-proline and the thiohydrolase aneE transfers this activated L-proline derivative to aculenes D and C to produce respectively aculenes B and A. The dioxygenase aneA converts aculene D into aculene C, and aculene B into aculene A by introducing the 5,6-alkene moiety. Asperculanes A, B, C and F, as well as 14-prolyl asperculane C, might be shunt products of the pathway. This is Nonribosomal peptide synthetase aneB from Aspergillus aculeatus (strain ATCC 16872 / CBS 172.66 / WB 5094).